We begin with the raw amino-acid sequence, 115 residues long: Promotilin (115 aa).

The N-terminal stretch at 1-25 (MLSRKATAILLVVHAAAMLASQTEG) is a signal peptide. The tract at residues 43–73 (RYKGQKKSLSVQQRSEEVGPVDPAEPREEKQ) is disordered.

The protein belongs to the motilin family.

It localises to the secreted. Plays an important role in the regulation of interdigestive gastrointestinal motility and indirectly causes rhythmic contraction of duodenal and colonic smooth muscle. In Ovis aries (Sheep), this protein is Promotilin (MLN).